The chain runs to 479 residues: CBL-interacting serine/threonine-protein kinase 10 (479 aa).

The region spanning 12–266 is the Protein kinase domain; sequence YDVGRLLGQG…IARIRESSWF (255 aa). Residues 18–26 and Lys-41 each bind ATP; that span reads LGQGTFAKV. The active-site Proton acceptor is the Asp-134. Residues 152–181 form an activation loop region; that stretch reads DFGLSALADCKRQDGLLHTTCGTPAYVAPE. Ser-156 is modified (phosphoserine). Thr-170 is modified (phosphothreonine). Residues 286 to 323 form a disordered region; the sequence is SVEAGTAGTNENGAGPSENGAGPSENGDRVTEENHTDE. The segment covering 288–300 has biased composition (low complexity); that stretch reads EAGTAGTNENGAG. Positions 311–323 are enriched in basic and acidic residues; it reads NGDRVTEENHTDE. Positions 322 to 346 constitute an NAF domain; sequence DEPTNLNAFDLIALSAGFDLAGLFG. Residues 350 to 379 form a PPI region; the sequence is KRESRFTSQKPASVIISKLEEVAQRLKLSI. Positions 456–479 are disordered; that stretch reads SQQETEYQQQQQQEQQEQEEPLKF. Residues 457–470 are compositionally biased toward low complexity; sequence QQETEYQQQQQQEQ.

Belongs to the protein kinase superfamily. CAMK Ser/Thr protein kinase family. SNF1 subfamily. As to quaternary structure, interacts with CBL4/SOS3. It depends on Mn(2+) as a cofactor. Mostly expressed in roots.

The catalysed reaction is L-seryl-[protein] + ATP = O-phospho-L-seryl-[protein] + ADP + H(+). It catalyses the reaction L-threonyl-[protein] + ATP = O-phospho-L-threonyl-[protein] + ADP + H(+). In terms of biological role, CIPK serine-threonine protein kinases interact with CBL proteins. Binding of a CBL protein to the regulatory NAF domain of CIPK protein lead to the activation of the kinase in a calcium-dependent manner. The polypeptide is CBL-interacting serine/threonine-protein kinase 10 (CIPK10) (Arabidopsis thaliana (Mouse-ear cress)).